The following is a 199-amino-acid chain: Recombination protein RecR (199 aa).

Residues 57-72 (CRQCRTLTEDELCPQC) form a C4-type zinc finger. The Toprim domain maps to 80–174 (SLLCVVQSPV…TISRIAHGVP (95 aa)).

The protein belongs to the RecR family.

Functionally, may play a role in DNA repair. It seems to be involved in an RecBC-independent recombinational process of DNA repair. It may act with RecF and RecO. The sequence is that of Recombination protein RecR from Stutzerimonas stutzeri (strain A1501) (Pseudomonas stutzeri).